The primary structure comprises 139 residues: 6,7-dimethyl-8-ribityllumazine synthase (139 aa).

5-amino-6-(D-ribitylamino)uracil-binding positions include Phe11, 42 to 44, and 66 to 68; these read ALE and VVI. (2S)-2-hydroxy-3-oxobutyl phosphate is bound at residue 71 to 72; that stretch reads ET. Catalysis depends on His74, which acts as the Proton donor. Asn98 is a binding site for 5-amino-6-(D-ribitylamino)uracil. Arg112 contributes to the (2S)-2-hydroxy-3-oxobutyl phosphate binding site.

The protein belongs to the DMRL synthase family.

It catalyses the reaction (2S)-2-hydroxy-3-oxobutyl phosphate + 5-amino-6-(D-ribitylamino)uracil = 6,7-dimethyl-8-(1-D-ribityl)lumazine + phosphate + 2 H2O + H(+). It functions in the pathway cofactor biosynthesis; riboflavin biosynthesis; riboflavin from 2-hydroxy-3-oxobutyl phosphate and 5-amino-6-(D-ribitylamino)uracil: step 1/2. Its function is as follows. Catalyzes the formation of 6,7-dimethyl-8-ribityllumazine by condensation of 5-amino-6-(D-ribitylamino)uracil with 3,4-dihydroxy-2-butanone 4-phosphate. This is the penultimate step in the biosynthesis of riboflavin. This is 6,7-dimethyl-8-ribityllumazine synthase from Zymomonas mobilis subsp. mobilis (strain ATCC 31821 / ZM4 / CP4).